The chain runs to 340 residues: Replication factor C subunit 5 (340 aa).

Met1 carries the N-acetylmethionine modification. Residue 60–67 (GPPGTGKT) participates in ATP binding.

Belongs to the activator 1 small subunits family. Subunit of the RFC complex, an heteropentameric complex consisting of a large subunit RFC1 and four small subunits RFC2, RFC3, RFC4 and RFC5; the RFC complex interacts with PCNA. Forms an heterotetrameric complex with RFC2, RFC3 and RFC4; this complex has ATPase activity but is not stimulated by PCNA. The heterotetramer of subunits RFC2, RFC3, RFC4 and RFC5 interacts with RAD17.

It is found in the nucleus. Its function is as follows. Subunit of the replication factor C (RFC) complex which acts during elongation of primed DNA templates by DNA polymerases delta and epsilon, and is necessary for ATP-dependent loading of proliferating cell nuclear antigen (PCNA) onto primed DNA. The polypeptide is Replication factor C subunit 5 (RFC5) (Homo sapiens (Human)).